The following is a 276-amino-acid chain: Glutamate 5-kinase (276 aa).

Lysine 14 provides a ligand contact to ATP. Substrate contacts are provided by serine 54, aspartate 141, and asparagine 157. Residues 177 to 178 and 219 to 225 contribute to the ATP site; these read SD and TGGMLTK.

This sequence belongs to the glutamate 5-kinase family.

The protein localises to the cytoplasm. It catalyses the reaction L-glutamate + ATP = L-glutamyl 5-phosphate + ADP. The protein operates within amino-acid biosynthesis; L-proline biosynthesis; L-glutamate 5-semialdehyde from L-glutamate: step 1/2. In terms of biological role, catalyzes the transfer of a phosphate group to glutamate to form L-glutamate 5-phosphate. The polypeptide is Glutamate 5-kinase (Listeria monocytogenes serovar 1/2a (strain ATCC BAA-679 / EGD-e)).